The primary structure comprises 110 residues: UPF0060 membrane protein Rpic_4131 (110 aa).

4 helical membrane-spanning segments follow: residues 8–28, 33–53, 65–85, and 88–108; these read VLFA…WLVL, PFWL…LLTL, YGGV…GVAL, and WDVG…LQPQ.

It belongs to the UPF0060 family.

It localises to the cell inner membrane. This is UPF0060 membrane protein Rpic_4131 from Ralstonia pickettii (strain 12J).